The primary structure comprises 663 residues: Beta-galactosidase BgaH (663 aa).

Arg103 is a substrate binding site. Cys107 contacts Zn(2+). Residue Asn141 coordinates substrate. Catalysis depends on Glu142, which acts as the Proton donor. Zn(2+) contacts are provided by Cys151, Cys153, and Cys156. Glu311 serves as the catalytic Nucleophile. Substrate-binding positions include Trp319 and 359 to 362; that span reads EQYH.

It belongs to the glycosyl hydrolase 42 family. As to quaternary structure, homodimer.

The enzyme catalyses Hydrolysis of terminal non-reducing beta-D-galactose residues in beta-D-galactosides.. With respect to regulation, requires 4 M NaCl for maximal activity. Loss of activity if DTT or beta-mercaptoethanol is omitted from buffers. Addition of 5-20 mM EDTA, 1 mM Cu(2+) or 1 mM Zn(2+) results in loss of activity. In terms of biological role, when overexpressed, cleaves several different substrates including o-nitrophenyl-beta-D-galactopyranoside (ONPG), chromogen 5-bromo-4-chloro-3-indolyl-beta-D-galactopyranoside (X-Gal) and lactulose, but not lactose. Also has beta-D-fucosidase activity. No beta-L-fucosidase, beta-glucosidase, beta-arabinosidase or beta-xylosidase activity. The sequence is that of Beta-galactosidase BgaH from Haloferax lucentense (strain DSM 14919 / JCM 9276 / NCIMB 13854 / Aa 2.2) (Haloferax alicantei).